Consider the following 1117-residue polypeptide: Rhoptry apical surface protein 3 (1117 aa).

Over residues 1 to 12 the composition is skewed to polar residues; that stretch reads MENRPRQQTSGH. Disordered regions lie at residues 1-27, 47-243, 258-301, 325-398, 415-442, 490-572, 600-619, and 654-736; these read MENR…SRPG, NHER…SHFT, DSER…NKGI, SDFK…SLST, WNHA…FLAA, AEAV…ESEL, RPLL…ELRS, and QDGT…RLQG. Composition is skewed to basic and acidic residues over residues 83 to 100, 197 to 209, and 275 to 300; these read DSNH…DSQK, TPLR…RHVS, and MKPK…DNKG. Low complexity-rich tracts occupy residues 418 to 442 and 490 to 508; these read ASPG…FLAA and AEAV…GDSS. Positions 510-520 are enriched in basic and acidic residues; it reads ESDHSGRERSR. The span at 530–540 shows a compositional bias: polar residues; the sequence is NEITTMRSQRS. The segment covering 546–555 has biased composition (basic and acidic residues); that stretch reads FSREPERESD. A compositionally biased stretch (polar residues) spans 557–569; it reads GEMTPTGETSGSE. Over residues 724–734 the composition is skewed to basic and acidic residues; that stretch reads DADRKQEEKRL. Residues 752-788 enclose the BSD domain; the sequence is MLSVDRRLRKLHSDTAVRRMGETEFWKLYFYQVFLLM. Residues 829–838 show a composition bias toward polar residues; that stretch reads QTSGFTESDT. Disordered regions lie at residues 829 to 848, 858 to 891, 909 to 964, 1031 to 1066, and 1095 to 1117; these read QTSG…YGFA, IIPP…APEQ, RSPS…GDSP, SSSQ…PSHL, and GTCG…GARA. Residues 839–848 show a composition bias toward low complexity; the sequence is SSPSPSYGFA. Over residues 909–931 the composition is skewed to low complexity; it reads RSPSLSSSSSGTTSVSARGTGSS. Polar residues predominate over residues 1031 to 1044; that stretch reads SSSQVNGRVSTSRG. Basic and acidic residues-rich tracts occupy residues 1046 to 1062 and 1108 to 1117; these read MGED…RLEG and KGKEVQGARA.

As to quaternary structure, interacts with RASP2.

It localises to the cytoplasmic vesicle. It is found in the secretory vesicle. The protein resides in the rhoptry membrane. This Toxoplasma gondii (strain ATCC 50853 / GT1) protein is Rhoptry apical surface protein 3.